A 248-amino-acid chain; its full sequence is Meiotically up-regulated gene 110 protein (248 aa).

A helical transmembrane segment spans residues 23–43; it reads LRFVFWFSVLIPIFFIALIII.

The protein resides in the membrane. Functionally, has a role in meiosis. The polypeptide is Meiotically up-regulated gene 110 protein (mug110) (Schizosaccharomyces pombe (strain 972 / ATCC 24843) (Fission yeast)).